The following is a 233-amino-acid chain: Phosphoribosylformylglycinamidine synthase subunit PurQ (233 aa).

The region spanning S3 to A233 is the Glutamine amidotransferase type-1 domain. C87 (nucleophile) is an active-site residue. Catalysis depends on residues H204 and E206.

Part of the FGAM synthase complex composed of 1 PurL, 1 PurQ and 2 PurS subunits.

It localises to the cytoplasm. It catalyses the reaction N(2)-formyl-N(1)-(5-phospho-beta-D-ribosyl)glycinamide + L-glutamine + ATP + H2O = 2-formamido-N(1)-(5-O-phospho-beta-D-ribosyl)acetamidine + L-glutamate + ADP + phosphate + H(+). It carries out the reaction L-glutamine + H2O = L-glutamate + NH4(+). It participates in purine metabolism; IMP biosynthesis via de novo pathway; 5-amino-1-(5-phospho-D-ribosyl)imidazole from N(2)-formyl-N(1)-(5-phospho-D-ribosyl)glycinamide: step 1/2. Part of the phosphoribosylformylglycinamidine synthase complex involved in the purines biosynthetic pathway. Catalyzes the ATP-dependent conversion of formylglycinamide ribonucleotide (FGAR) and glutamine to yield formylglycinamidine ribonucleotide (FGAM) and glutamate. The FGAM synthase complex is composed of three subunits. PurQ produces an ammonia molecule by converting glutamine to glutamate. PurL transfers the ammonia molecule to FGAR to form FGAM in an ATP-dependent manner. PurS interacts with PurQ and PurL and is thought to assist in the transfer of the ammonia molecule from PurQ to PurL. The protein is Phosphoribosylformylglycinamidine synthase subunit PurQ of Rhodopseudomonas palustris (strain HaA2).